The chain runs to 1244 residues: ATP-dependent helicase/nuclease subunit A (1244 aa).

The UvrD-like helicase ATP-binding domain occupies 4-477; the sequence is TKWTEEQLSA…IQLYKNFRSR (474 aa). Residue 25-32 coordinates ATP; the sequence is AAAGSGKT. The UvrD-like helicase C-terminal domain maps to 517 to 811; that stretch reads KNVDDIIGGP…RIMSIHKSKG (295 aa).

This sequence belongs to the helicase family. AddA subfamily. As to quaternary structure, heterodimer of AddA and AddB/RexB. Requires Mg(2+) as cofactor.

The catalysed reaction is Couples ATP hydrolysis with the unwinding of duplex DNA by translocating in the 3'-5' direction.. It catalyses the reaction ATP + H2O = ADP + phosphate + H(+). Its function is as follows. The heterodimer acts as both an ATP-dependent DNA helicase and an ATP-dependent, dual-direction single-stranded exonuclease. Recognizes the chi site generating a DNA molecule suitable for the initiation of homologous recombination. The AddA nuclease domain is required for chi fragment generation; this subunit has the helicase and 3' -&gt; 5' nuclease activities. This chain is ATP-dependent helicase/nuclease subunit A, found in Clostridium botulinum (strain Alaska E43 / Type E3).